Reading from the N-terminus, the 409-residue chain is Tyrosine--tRNA ligase (409 aa).

The short motif at 54 to 63 (PTAPDIHLGH) is the 'HIGH' region element. Residues 238-242 (KMSKS) carry the 'KMSKS' region motif. Residue Lys-241 coordinates ATP. One can recognise an S4 RNA-binding domain in the interval 347 to 407 (MGILHVLRAS…GKRKFARVNL (61 aa)).

The protein belongs to the class-I aminoacyl-tRNA synthetase family. TyrS type 2 subfamily. In terms of assembly, homodimer.

The protein resides in the cytoplasm. It catalyses the reaction tRNA(Tyr) + L-tyrosine + ATP = L-tyrosyl-tRNA(Tyr) + AMP + diphosphate + H(+). Catalyzes the attachment of tyrosine to tRNA(Tyr) in a two-step reaction: tyrosine is first activated by ATP to form Tyr-AMP and then transferred to the acceptor end of tRNA(Tyr). This Bordetella avium (strain 197N) protein is Tyrosine--tRNA ligase.